Consider the following 169-residue polypeptide: Secretory-abundant heat soluble protein 1 (169 aa).

The first 19 residues, 1–19, serve as a signal peptide directing secretion; the sequence is MSRAAVAIALLGCVVAAYG. The tract at residues 31-60 is SAHS-c1; the sequence is EWTGKSWMGKWESTDRIENFDAFISALGLP. Residues 75-103 are SAHS-c2; sequence WKEGDHYHHQISVPDKNYKNDVNFKLNEE. The N-linked (GlcNAc...) asparagine glycan is linked to Asn-109. Positions 116–165 are SAHS-c3; sequence KYTEDGGNLKAEVHVPSRNKVIHDEYKVNGDELEKTYKVGDVTAKRWYKK.

Belongs to the Secretory-abundant heat soluble protein (SAHS) family.

It is found in the secreted. Its function is as follows. Secreted heat soluble protein acting as a molecular shield in water-deficient condition. Tardigrade-specific intrinsically disordered proteins (TDPs) are essential for desiccation tolerance by forming non-crystalline amorphous solids upon desiccation, and this vitrified state mirrors their protective capabilities. The sequence is that of Secretory-abundant heat soluble protein 1 from Ramazzottius varieornatus (Water bear).